The sequence spans 62 residues: MWRIWQLFDPRQALVGLATFLFVLALLIHFILLSTERFNWLEGASTKPVQTSMVMPSSDLAV.

M1 carries the N-formylmethionine modification. Topologically, residues 1–12 (MWRIWQLFDPRQ) are cytoplasmic. The chain crosses the membrane as a helical span at residues 13–33 (ALVGLATFLFVLALLIHFILL). Residue H29 participates in a bacteriochlorophyll binding. Topologically, residues 34–52 (STERFNWLEGASTKPVQTS) are periplasmic. Residues 53 to 62 (MVMPSSDLAV) constitute a propeptide that is removed on maturation.

Belongs to the antenna complex alpha subunit family. The core complex is formed by different alpha and beta chains, binding bacteriochlorophyll molecules, and arranged most probably in tetrameric structures disposed around the reaction center. The non-pigmented gamma chains may constitute additional components.

It is found in the cell inner membrane. In terms of biological role, antenna complexes are light-harvesting systems, which transfer the excitation energy to the reaction centers. The chain is Light-harvesting protein B-870 alpha chain from Rhodospirillum rubrum.